The primary structure comprises 515 residues: 1-pyrroline-5-carboxylate dehydrogenase (515 aa).

Residues glutamate 286 and cysteine 320 contribute to the active site.

The protein belongs to the aldehyde dehydrogenase family. RocA subfamily.

The catalysed reaction is L-glutamate 5-semialdehyde + NAD(+) + H2O = L-glutamate + NADH + 2 H(+). Its pathway is amino-acid degradation; L-proline degradation into L-glutamate; L-glutamate from L-proline: step 2/2. The polypeptide is 1-pyrroline-5-carboxylate dehydrogenase (Bacillus anthracis (strain A0248)).